Here is a 478-residue protein sequence, read N- to C-terminus: Aspartyl/glutamyl-tRNA(Asn/Gln) amidotransferase subunit B (478 aa).

The protein belongs to the GatB/GatE family. GatB subfamily. As to quaternary structure, heterotrimer of A, B and C subunits.

The catalysed reaction is L-glutamyl-tRNA(Gln) + L-glutamine + ATP + H2O = L-glutaminyl-tRNA(Gln) + L-glutamate + ADP + phosphate + H(+). The enzyme catalyses L-aspartyl-tRNA(Asn) + L-glutamine + ATP + H2O = L-asparaginyl-tRNA(Asn) + L-glutamate + ADP + phosphate + 2 H(+). Allows the formation of correctly charged Asn-tRNA(Asn) or Gln-tRNA(Gln) through the transamidation of misacylated Asp-tRNA(Asn) or Glu-tRNA(Gln) in organisms which lack either or both of asparaginyl-tRNA or glutaminyl-tRNA synthetases. The reaction takes place in the presence of glutamine and ATP through an activated phospho-Asp-tRNA(Asn) or phospho-Glu-tRNA(Gln). This chain is Aspartyl/glutamyl-tRNA(Asn/Gln) amidotransferase subunit B, found in Brevibacillus brevis (strain 47 / JCM 6285 / NBRC 100599).